The chain runs to 1159 residues: Ferroxidase HEPHL1 (1159 aa).

Residues 1 to 23 (MFLKQPGGCILLQFLGLLGLVGA) form the signal peptide. 6 consecutive Plastocyanin-like domains span residues 24 to 206 (VTRT…LLVC), 217 to 365 (MRTD…VGNC), 378 to 560 (QRRY…LLVC), 570 to 718 (TQKG…ISSC), 730 to 906 (MLRT…LITC), and 914 to 1092 (KGRR…VPSQ). Residues 24–1114 (VTRTYYIGIV…KNLRPRGAKA (1091 aa)) are Extracellular-facing. 2 residues coordinate Cu cation: His126 and His128. Asn160 is a glycosylation site (N-linked (GlcNAc...) asparagine). A disulfide bond links Cys180 and Cys206. The Cu cation site is built by His186 and His188. Asn235 carries an N-linked (GlcNAc...) asparagine glycan. An intrachain disulfide couples Cys284 to Cys365. Cu cation contacts are provided by His303, Cys346, and His351. A glycan (N-linked (GlcNAc...) asparagine) is linked at Asn406. Residues Cys534 and Cys560 are joined by a disulfide bond. A glycan (N-linked (GlcNAc...) asparagine) is linked at Asn588. Cys637 and Cys718 are oxidised to a cystine. Cu cation contacts are provided by His656, Cys699, His704, and Met709. Asn771 carries an N-linked (GlcNAc...) asparagine glycan. Cysteines 880 and 906 form a disulfide. A glycan (N-linked (GlcNAc...) asparagine) is linked at Asn934. 8 residues coordinate Cu cation: His1002, His1005, His1007, His1047, Cys1048, His1049, His1053, and Met1058. Residues 1115–1135 (ALVILFILGLLLLVATVVLAL) traverse the membrane as a helical segment. At 1136-1159 (RLRSSRRQMAYREVQSCALPTDAL) the chain is on the cytoplasmic side.

This sequence belongs to the multicopper oxidase family. Requires Cu cation as cofactor.

The protein resides in the membrane. It catalyses the reaction 4 Fe(2+) + O2 + 4 H(+) = 4 Fe(3+) + 2 H2O. Is a copper-binding glycoprotein with ferroxidase activity. It oxidizes Fe(2+) to Fe(3+) without releasing radical oxygen species. May be involved in the regulation of intracellular iron content. In Mus musculus (Mouse), this protein is Ferroxidase HEPHL1 (Hephl1).